Reading from the N-terminus, the 255-residue chain is Na(+)-translocating NADH-quinone reductase subunit C (255 aa).

The helical transmembrane segment at 11–31 (LGVVVGLSLVCSIIVSTAAVG) threads the bilayer. Thr223 is modified (FMN phosphoryl threonine).

This sequence belongs to the NqrC family. As to quaternary structure, composed of six subunits; NqrA, NqrB, NqrC, NqrD, NqrE and NqrF. Requires FMN as cofactor.

The protein resides in the cell inner membrane. It carries out the reaction a ubiquinone + n Na(+)(in) + NADH + H(+) = a ubiquinol + n Na(+)(out) + NAD(+). In terms of biological role, NQR complex catalyzes the reduction of ubiquinone-1 to ubiquinol by two successive reactions, coupled with the transport of Na(+) ions from the cytoplasm to the periplasm. NqrA to NqrE are probably involved in the second step, the conversion of ubisemiquinone to ubiquinol. This Vibrio vulnificus (strain CMCP6) protein is Na(+)-translocating NADH-quinone reductase subunit C.